Reading from the N-terminus, the 505-residue chain is Protein dml1 (505 aa).

The disordered stretch occupies residues 330–358 (LPEDMSNHTQPVQNPEDRRTQASKGGSSK).

Belongs to the misato family.

Its subcellular location is the mitochondrion. In terms of biological role, involved in the partitioning of the mitochondrial organelle and mitochondrial DNA (mtDNA) inheritance. The polypeptide is Protein dml1 (dml1) (Aspergillus fumigatus (strain ATCC MYA-4609 / CBS 101355 / FGSC A1100 / Af293) (Neosartorya fumigata)).